The sequence spans 543 residues: Headcase protein homolog (543 aa).

2 disordered regions span residues 1 to 26 (MPNP…QENG) and 197 to 283 (MQDE…LSPA). Basic and acidic residues-rich tracts occupy residues 197-211 (MQDE…EKNT) and 235-250 (PSHD…RQNS). Phosphoserine occurs at positions 264 and 268.

Expressed in all tissues examined. Highest levels are in the spleen, thymus, peripheral blood and heart. Lowest in the kidney and pancreas.

Functionally, may play an important role in some human cancers. May be part of the regulatory mechanism in the development of epithelial tube networks such as the circulatory system and lungs. The polypeptide is Headcase protein homolog (HECA) (Homo sapiens (Human)).